A 247-amino-acid polypeptide reads, in one-letter code: Probable transcriptional regulatory protein DvMF_3201 (247 aa).

Residues Met1–Arg21 form a disordered region.

Belongs to the TACO1 family.

The protein resides in the cytoplasm. The polypeptide is Probable transcriptional regulatory protein DvMF_3201 (Nitratidesulfovibrio vulgaris (strain DSM 19637 / Miyazaki F) (Desulfovibrio vulgaris)).